A 198-amino-acid chain; its full sequence is Recombination protein RecR (198 aa).

Residues 58–73 (CLNCGNVGTSDICDIC) form a C4-type zinc finger. Positions 81 to 175 (GELCVVEDVA…RLTSLAQGVP (95 aa)) constitute a Toprim domain.

The protein belongs to the RecR family.

May play a role in DNA repair. It seems to be involved in an RecBC-independent recombinational process of DNA repair. It may act with RecF and RecO. The chain is Recombination protein RecR from Ruegeria pomeroyi (strain ATCC 700808 / DSM 15171 / DSS-3) (Silicibacter pomeroyi).